The chain runs to 412 residues: Putative competence-damage inducible protein (412 aa).

It belongs to the CinA family.

This is Putative competence-damage inducible protein from Clostridium perfringens (strain ATCC 13124 / DSM 756 / JCM 1290 / NCIMB 6125 / NCTC 8237 / Type A).